A 97-amino-acid polypeptide reads, in one-letter code: Co-chaperonin GroES (97 aa).

This sequence belongs to the GroES chaperonin family. As to quaternary structure, heptamer of 7 subunits arranged in a ring. Interacts with the chaperonin GroEL.

The protein resides in the cytoplasm. Functionally, together with the chaperonin GroEL, plays an essential role in assisting protein folding. The GroEL-GroES system forms a nano-cage that allows encapsulation of the non-native substrate proteins and provides a physical environment optimized to promote and accelerate protein folding. GroES binds to the apical surface of the GroEL ring, thereby capping the opening of the GroEL channel. This Pseudomonas aeruginosa (strain LESB58) protein is Co-chaperonin GroES.